The primary structure comprises 175 residues: Adenine phosphoribosyltransferase (175 aa).

This sequence belongs to the purine/pyrimidine phosphoribosyltransferase family. Homodimer.

It localises to the cytoplasm. The catalysed reaction is AMP + diphosphate = 5-phospho-alpha-D-ribose 1-diphosphate + adenine. Its pathway is purine metabolism; AMP biosynthesis via salvage pathway; AMP from adenine: step 1/1. In terms of biological role, catalyzes a salvage reaction resulting in the formation of AMP, that is energically less costly than de novo synthesis. The protein is Adenine phosphoribosyltransferase of Caldicellulosiruptor saccharolyticus (strain ATCC 43494 / DSM 8903 / Tp8T 6331).